A 230-amino-acid chain; its full sequence is Cytochrome c oxidase subunit 2 (230 aa).

Over 1-14 the chain is Mitochondrial intermembrane; the sequence is MAHPAQLGFQDAAS. Residues 15 to 45 form a helical membrane-spanning segment; sequence PVMEELLCFHDHALMIVFLISTLVLYIIIAM. The Mitochondrial matrix portion of the chain corresponds to 46–59; the sequence is VSTKLTNKFILDSQ. The helical transmembrane segment at 60 to 87 threads the bilayer; the sequence is EIEIVWTVLPAIILILIALPSLRILYLM. At 88–230 the chain is on the mitochondrial intermembrane side; that stretch reads DEINDPHVTI…NWSSAMLEDA (143 aa). Residues His161, Cys196, Glu198, Cys200, His204, and Met207 each contribute to the Cu cation site. Glu198 serves as a coordination point for Mg(2+).

It belongs to the cytochrome c oxidase subunit 2 family. As to quaternary structure, component of the cytochrome c oxidase (complex IV, CIV), a multisubunit enzyme composed of 14 subunits. The complex is composed of a catalytic core of 3 subunits MT-CO1, MT-CO2 and MT-CO3, encoded in the mitochondrial DNA, and 11 supernumerary subunits COX4I, COX5A, COX5B, COX6A, COX6B, COX6C, COX7A, COX7B, COX7C, COX8 and NDUFA4, which are encoded in the nuclear genome. The complex exists as a monomer or a dimer and forms supercomplexes (SCs) in the inner mitochondrial membrane with NADH-ubiquinone oxidoreductase (complex I, CI) and ubiquinol-cytochrome c oxidoreductase (cytochrome b-c1 complex, complex III, CIII), resulting in different assemblies (supercomplex SCI(1)III(2)IV(1) and megacomplex MCI(2)III(2)IV(2)). Found in a complex with TMEM177, COA6, COX18, COX20, SCO1 and SCO2. Interacts with TMEM177 in a COX20-dependent manner. Interacts with COX20. Interacts with COX16. The cofactor is Cu cation.

The protein resides in the mitochondrion inner membrane. It catalyses the reaction 4 Fe(II)-[cytochrome c] + O2 + 8 H(+)(in) = 4 Fe(III)-[cytochrome c] + 2 H2O + 4 H(+)(out). Functionally, component of the cytochrome c oxidase, the last enzyme in the mitochondrial electron transport chain which drives oxidative phosphorylation. The respiratory chain contains 3 multisubunit complexes succinate dehydrogenase (complex II, CII), ubiquinol-cytochrome c oxidoreductase (cytochrome b-c1 complex, complex III, CIII) and cytochrome c oxidase (complex IV, CIV), that cooperate to transfer electrons derived from NADH and succinate to molecular oxygen, creating an electrochemical gradient over the inner membrane that drives transmembrane transport and the ATP synthase. Cytochrome c oxidase is the component of the respiratory chain that catalyzes the reduction of oxygen to water. Electrons originating from reduced cytochrome c in the intermembrane space (IMS) are transferred via the dinuclear copper A center (CU(A)) of subunit 2 and heme A of subunit 1 to the active site in subunit 1, a binuclear center (BNC) formed by heme A3 and copper B (CU(B)). The BNC reduces molecular oxygen to 2 water molecules using 4 electrons from cytochrome c in the IMS and 4 protons from the mitochondrial matrix. This Danio rerio (Zebrafish) protein is Cytochrome c oxidase subunit 2 (mt-co2).